We begin with the raw amino-acid sequence, 20 residues long: Dihydrolipoamide-residue succinyltransferase component of 2-oxoglutarate dehydrogenase complex (20 aa).

This sequence belongs to the 2-oxoacid dehydrogenase family. In terms of assembly, forms a 24-polypeptide structural core with octahedral symmetry. Requires (R)-lipoate as cofactor.

It localises to the mitochondrion membrane. The catalysed reaction is N(6)-[(R)-dihydrolipoyl]-L-lysyl-[protein] + succinyl-CoA = N(6)-[(R)-S(8)-succinyldihydrolipoyl]-L-lysyl-[protein] + CoA. It participates in amino-acid degradation; L-lysine degradation via saccharopine pathway; glutaryl-CoA from L-lysine: step 6/6. In terms of biological role, the 2-oxoglutarate dehydrogenase complex catalyzes the overall conversion of 2-oxoglutarate to succinyl-CoA and CO(2). It contains multiple copies of three enzymatic components: 2-oxoglutarate dehydrogenase (E1), dihydrolipoamide succinyltransferase (E2) and lipoamide dehydrogenase (E3). In Solanum tuberosum (Potato), this protein is Dihydrolipoamide-residue succinyltransferase component of 2-oxoglutarate dehydrogenase complex.